Reading from the N-terminus, the 1192-residue chain is DNA topoisomerase 2 (1192 aa).

ATP is bound by residues asparagine 64, asparagine 95, and 142–149; that span reads GTNGVGLK. Mg(2+)-binding residues include glutamate 438, aspartate 539, and aspartate 541. Positions 707–1174 constitute a Topo IIA-type catalytic domain; that stretch reads IPNFLDGMTR…PGASVWLEEI (468 aa). Tyrosine 800 acts as the O-(5'-phospho-DNA)-tyrosine intermediate in catalysis.

It belongs to the type II topoisomerase family. Mg(2+) is required as a cofactor. Mn(2+) serves as cofactor. The cofactor is Ca(2+).

The protein resides in the host cytoplasm. It carries out the reaction ATP-dependent breakage, passage and rejoining of double-stranded DNA.. Functionally, type II topoisomerase. Processively relaxes supercoiled DNA. Displays DNA-supercoiling activity only when associated with the viral histone-like protein. In African swine fever virus (strain Badajoz 1971 Vero-adapted) (Ba71V), this protein is DNA topoisomerase 2 (TOP).